Here is a 252-residue protein sequence, read N- to C-terminus: MERVLIVNADDFGLSKGQNYGIVEAYRNGVVTSTTALVNGEAIDHAAQLSRELPALGVGMHFVLTLGKPVSEMPGLTRDGLLGKWIWQMAEEDTLPLDEIAHELACQYQRFIDVFGREPTHLDSHHHVHMFPQIFPIVARFAAQRGIALRIDRQTVLNADDLPSDLRSTQGFSSEFYGEEITEACFLRILDASAHRGEASLEVMCHPAFVDNIIRQSAYCYPRLTELEVLTSASLKAGIAERGYRPGSFLDI.

2 residues coordinate Mg(2+): H61 and H125.

Belongs to the YdjC deacetylase family. ChbG subfamily. In terms of assembly, homodimer. The cofactor is Mg(2+).

The protein localises to the cytoplasm. The catalysed reaction is N,N'-diacetylchitobiose + H2O = N-acetyl-beta-D-glucosaminyl-(1-&gt;4)-D-glucosamine + acetate. It catalyses the reaction diacetylchitobiose-6'-phosphate + H2O = N'-monoacetylchitobiose-6'-phosphate + acetate. The protein operates within glycan degradation; chitin degradation. Its function is as follows. Involved in the degradation of chitin. ChbG is essential for growth on the acetylated chitooligosaccharides chitobiose and chitotriose but is dispensable for growth on cellobiose and chitosan dimer, the deacetylated form of chitobiose. Deacetylation of chitobiose-6-P and chitotriose-6-P is necessary for both the activation of the chb promoter by the regulatory protein ChbR and the hydrolysis of phosphorylated beta-glucosides by the phospho-beta-glucosidase ChbF. Catalyzes the removal of only one acetyl group from chitobiose-6-P to yield monoacetylchitobiose-6-P, the inducer of ChbR and the substrate of ChbF. In Salmonella newport (strain SL254), this protein is Chitooligosaccharide deacetylase.